The sequence spans 389 residues: Chitin-binding protein CbpD (389 aa).

An N-terminal signal peptide occupies residues 1–25 (MKHYSATLALLPLTLALFLPQAAHA). A Chitin-binding type-4 domain is found at 26–208 (HGSMETPPSR…EAFYACIDVS (183 aa)). Tyrosine 37 carries the post-translational modification Phosphotyrosine. Serine 210 is subject to Phosphoserine.

Its subcellular location is the secreted. Its function is as follows. Binds but does not hydrolyze chitin. The sequence is that of Chitin-binding protein CbpD (cpbD) from Pseudomonas aeruginosa (strain UCBPP-PA14).